Consider the following 149-residue polypeptide: Cytochrome c-type biogenesis protein CcmE (149 aa).

At 1-7 (MKKRHQR) the chain is on the cytoplasmic side. A helical; Signal-anchor for type II membrane protein transmembrane segment spans residues 8 to 28 (LFLVLGVVAGVSVATALVLNA). The Periplasmic segment spans residues 29–149 (FRDNMTFFIT…EHSVDEVGDY (121 aa)). Heme contacts are provided by histidine 123 and tyrosine 127.

The protein belongs to the CcmE/CycJ family.

Its subcellular location is the cell inner membrane. Heme chaperone required for the biogenesis of c-type cytochromes. Transiently binds heme delivered by CcmC and transfers the heme to apo-cytochromes in a process facilitated by CcmF and CcmH. The polypeptide is Cytochrome c-type biogenesis protein CcmE (Halorhodospira halophila (strain DSM 244 / SL1) (Ectothiorhodospira halophila (strain DSM 244 / SL1))).